The following is a 186-amino-acid chain: Lipid A palmitoyltransferase PagP (186 aa).

The first 25 residues, 1–25 (MNVSKYVAIFFFVFIQLISVGKVFA), serve as a signal peptide directing secretion. Residues His-58, Asp-101, and Ser-102 contribute to the active site.

It belongs to the lipid A palmitoyltransferase family. Homodimer.

It localises to the cell outer membrane. The catalysed reaction is lipid A (E. coli) + a 1-hexadecanoyl-2-acyl-sn-glycero-3-phosphocholine = hepta-acyl lipid A (E. coli) + a 2-acyl-sn-glycero-3-phosphocholine. It carries out the reaction lipid IIA + a 1-hexadecanoyl-2-acyl-sn-glycero-3-phosphocholine = lipid IIB + a 2-acyl-sn-glycero-3-phosphocholine. The enzyme catalyses lipid IVA (E. coli) + a 1-hexadecanoyl-2-acyl-sn-glycero-3-phosphocholine = lipid IVB (E. coli) + a 2-acyl-sn-glycero-3-phosphocholine. Transfers a palmitate residue from the sn-1 position of a phospholipid to the N-linked hydroxymyristate on the proximal unit of lipid A or its precursors. The sequence is that of Lipid A palmitoyltransferase PagP from Escherichia coli O6:H1 (strain CFT073 / ATCC 700928 / UPEC).